We begin with the raw amino-acid sequence, 279 residues long: Probable endonuclease 4 (279 aa).

Zn(2+) is bound by residues His69, His109, Glu145, Asp179, His182, His216, Asp229, His231, and Glu261.

The protein belongs to the AP endonuclease 2 family. Requires Zn(2+) as cofactor.

The catalysed reaction is Endonucleolytic cleavage to 5'-phosphooligonucleotide end-products.. Endonuclease IV plays a role in DNA repair. It cleaves phosphodiester bonds at apurinic or apyrimidinic (AP) sites, generating a 3'-hydroxyl group and a 5'-terminal sugar phosphate. The protein is Probable endonuclease 4 of Buchnera aphidicola subsp. Schizaphis graminum (strain Sg).